Consider the following 333-residue polypeptide: 5-formaminoimidazole-4-carboxamide-1-(beta)-D-ribofuranosyl 5'-monophosphate synthetase (333 aa).

2 residues coordinate 5-amino-1-(5-phospho-beta-D-ribosyl)imidazole-4-carboxamide: histidine 10 and serine 74. One can recognise an ATP-grasp domain in the interval 95-324; that stretch reads RNLFAWESNQ…ISREIRLALN (230 aa). ATP is bound by residues 125–185 and glutamate 207; that span reads VEDV…VPMY. Residue asparagine 230 coordinates 5-amino-1-(5-phospho-beta-D-ribosyl)imidazole-4-carboxamide. 2 residues coordinate Mg(2+): glutamate 269 and glutamate 282.

It belongs to the phosphohexose mutase family. The cofactor is Mg(2+). Mn(2+) serves as cofactor.

It carries out the reaction 5-amino-1-(5-phospho-beta-D-ribosyl)imidazole-4-carboxamide + formate + ATP = 5-formamido-1-(5-phospho-D-ribosyl)imidazole-4-carboxamide + ADP + phosphate. It functions in the pathway purine metabolism; IMP biosynthesis via de novo pathway; 5-formamido-1-(5-phospho-D-ribosyl)imidazole-4-carboxamide from 5-amino-1-(5-phospho-D-ribosyl)imidazole-4-carboxamide (formate route): step 1/1. Catalyzes the ATP- and formate-dependent formylation of 5-aminoimidazole-4-carboxamide-1-beta-d-ribofuranosyl 5'-monophosphate (AICAR) to 5-formaminoimidazole-4-carboxamide-1-beta-d-ribofuranosyl 5'-monophosphate (FAICAR) in the absence of folates. This Sulfolobus acidocaldarius (strain ATCC 33909 / DSM 639 / JCM 8929 / NBRC 15157 / NCIMB 11770) protein is 5-formaminoimidazole-4-carboxamide-1-(beta)-D-ribofuranosyl 5'-monophosphate synthetase.